The primary structure comprises 134 residues: MKPSERRKARRLAVQAIYSWQLSGNNIADVEHEFLTEQSLDGVDVAYFRELFSGVATKKTQLDELIIPHLERPIDEVSPVEKAIVRLATYELTFRKDVPYKVAINEAIELAKAFGADESHKFVNGLLDKLVARK.

The protein belongs to the NusB family.

Its function is as follows. Involved in transcription antitermination. Required for transcription of ribosomal RNA (rRNA) genes. Binds specifically to the boxA antiterminator sequence of the ribosomal RNA (rrn) operons. The polypeptide is Transcription antitermination protein NusB (Shewanella baltica (strain OS223)).